We begin with the raw amino-acid sequence, 553 residues long: Ribonuclease J 2 (553 aa).

Zn(2+) contacts are provided by histidine 69, histidine 71, histidine 138, and aspartate 160. 361 to 365 (RVSGH) is a binding site for substrate.

Belongs to the metallo-beta-lactamase superfamily. RNA-metabolizing metallo-beta-lactamase-like family. Bacterial RNase J subfamily. As to quaternary structure, homodimer, may be a subunit of the RNA degradosome. The cofactor is Zn(2+).

It is found in the cytoplasm. In terms of biological role, an RNase that has 5'-3' exonuclease and possibly endonuclease activity. Involved in maturation of rRNA and in some organisms also mRNA maturation and/or decay. Has an overlapping but not completely redundant role with RNase J1 in the decay of mRNA. The protein is Ribonuclease J 2 of Streptococcus pyogenes serotype M3 (strain ATCC BAA-595 / MGAS315).